We begin with the raw amino-acid sequence, 209 residues long: Uracil phosphoribosyltransferase (209 aa).

Residues Arg79, Arg104, and Asp131–Ser139 contribute to the 5-phospho-alpha-D-ribose 1-diphosphate site. Uracil contacts are provided by residues Ile194 and Gly199 to Ala201. Asp200 provides a ligand contact to 5-phospho-alpha-D-ribose 1-diphosphate.

This sequence belongs to the UPRTase family. Mg(2+) serves as cofactor.

The enzyme catalyses UMP + diphosphate = 5-phospho-alpha-D-ribose 1-diphosphate + uracil. The protein operates within pyrimidine metabolism; UMP biosynthesis via salvage pathway; UMP from uracil: step 1/1. With respect to regulation, allosterically activated by GTP. Catalyzes the conversion of uracil and 5-phospho-alpha-D-ribose 1-diphosphate (PRPP) to UMP and diphosphate. This chain is Uracil phosphoribosyltransferase, found in Alkaliphilus metalliredigens (strain QYMF).